A 346-amino-acid chain; its full sequence is Histidinol-phosphate aminotransferase (346 aa).

Residue K209 is modified to N6-(pyridoxal phosphate)lysine.

The protein belongs to the class-II pyridoxal-phosphate-dependent aminotransferase family. Histidinol-phosphate aminotransferase subfamily. As to quaternary structure, homodimer. The cofactor is pyridoxal 5'-phosphate.

It carries out the reaction L-histidinol phosphate + 2-oxoglutarate = 3-(imidazol-4-yl)-2-oxopropyl phosphate + L-glutamate. Its pathway is amino-acid biosynthesis; L-histidine biosynthesis; L-histidine from 5-phospho-alpha-D-ribose 1-diphosphate: step 7/9. This is Histidinol-phosphate aminotransferase from Vibrio parahaemolyticus serotype O3:K6 (strain RIMD 2210633).